We begin with the raw amino-acid sequence, 573 residues long: MAKVVLKAPDGPPSDVERIKRESRYLRGTLAETMEDPISAGIPDDDNRLMKFHGSYLQDDRDVRTERQKQKLEPAYQFMIRVRTPGGVATPEQWLVMDEIARKYANGTLKLTTRQAFQLHGVLKWNVKKTMQAINGALMTTLAACGDVNRNVMCNPNPYQSEVHAEVYEWAKLLSDHLLPKTRAYYEIWLDDEKVAGTPQVDGEEEPIYGPTYLPRKFKIGIAVPPSNDVDVFSQDIGLIAIVEDGKLAGFNVAIGGGMGMTHGDKTTYPQLAKVIGFCTPDQVVEVAEKIMTVQRDYGNRSVRKNARFKYTIDRLGLEVVKEEIERRLGWKLGEARPYHFEHNGDRYGWVEGVNGTWHFTLYVEGGRVKDDDDYKLMTGLREIAKVHTGDFRLTANQNLVIANVTSEKKAEIEALIAKYGLTDGKRYTALRRNSLACVALPTCGLAMAEAERYLPKLLDKIEEIIDENGLRDEEITIRMTGCPNGCARHVLAEIAFVGKAVGKYNMYLGAAFNGTRLGKLYRENIGEEEILRELRVLLARYAKERLDGEHFGDFVIRAGIVKEVTDGTNFHD.

Positions 438, 444, 483, and 487 each coordinate [4Fe-4S] cluster. Residue Cys487 coordinates siroheme.

It belongs to the nitrite and sulfite reductase 4Fe-4S domain family. In terms of assembly, alpha(8)-beta(8). The alpha component is a flavoprotein, the beta component is a hemoprotein. Requires siroheme as cofactor. [4Fe-4S] cluster serves as cofactor.

The enzyme catalyses hydrogen sulfide + 3 NADP(+) + 3 H2O = sulfite + 3 NADPH + 4 H(+). It participates in sulfur metabolism; hydrogen sulfide biosynthesis; hydrogen sulfide from sulfite (NADPH route): step 1/1. Its function is as follows. Component of the sulfite reductase complex that catalyzes the 6-electron reduction of sulfite to sulfide. This is one of several activities required for the biosynthesis of L-cysteine from sulfate. This Geobacillus thermodenitrificans (strain NG80-2) protein is Sulfite reductase [NADPH] hemoprotein beta-component.